The sequence spans 394 residues: Elongation factor Tu 1 (394 aa).

In terms of domain architecture, tr-type G spans K10–E204. Positions G19 to T26 are G1. Residue G19 to T26 coordinates GTP. T26 lines the Mg(2+) pocket. Residues G60 to N64 are G2. A G3 region spans residues D81–G84. Residues D81–H85 and N136–D139 each bind GTP. Residues N136–D139 form a G4 region. The G5 stretch occupies residues S174–L176.

It belongs to the TRAFAC class translation factor GTPase superfamily. Classic translation factor GTPase family. EF-Tu/EF-1A subfamily. Monomer.

It is found in the cytoplasm. It carries out the reaction GTP + H2O = GDP + phosphate + H(+). Functionally, GTP hydrolase that promotes the GTP-dependent binding of aminoacyl-tRNA to the A-site of ribosomes during protein biosynthesis. The protein is Elongation factor Tu 1 of Serratia proteamaculans (strain 568).